A 194-amino-acid chain; its full sequence is Imidazole glycerol phosphate synthase subunit HisH (194 aa).

The region spanning 3 to 194 (RIAIVDLGIG…LILLRNFRRL (192 aa)) is the Glutamine amidotransferase type-1 domain. The active-site Nucleophile is the Cys74. Residues His176 and Glu178 contribute to the active site.

As to quaternary structure, heterodimer of HisH and HisF.

Its subcellular location is the cytoplasm. The catalysed reaction is 5-[(5-phospho-1-deoxy-D-ribulos-1-ylimino)methylamino]-1-(5-phospho-beta-D-ribosyl)imidazole-4-carboxamide + L-glutamine = D-erythro-1-(imidazol-4-yl)glycerol 3-phosphate + 5-amino-1-(5-phospho-beta-D-ribosyl)imidazole-4-carboxamide + L-glutamate + H(+). It catalyses the reaction L-glutamine + H2O = L-glutamate + NH4(+). It participates in amino-acid biosynthesis; L-histidine biosynthesis; L-histidine from 5-phospho-alpha-D-ribose 1-diphosphate: step 5/9. Its function is as follows. IGPS catalyzes the conversion of PRFAR and glutamine to IGP, AICAR and glutamate. The HisH subunit catalyzes the hydrolysis of glutamine to glutamate and ammonia as part of the synthesis of IGP and AICAR. The resulting ammonia molecule is channeled to the active site of HisF. The protein is Imidazole glycerol phosphate synthase subunit HisH of Pyrococcus furiosus (strain ATCC 43587 / DSM 3638 / JCM 8422 / Vc1).